The following is a 377-amino-acid chain: Erythronate-4-phosphate dehydrogenase (377 aa).

2 residues coordinate substrate: Ser45 and Thr67. NAD(+)-binding positions include Asp147, 210–212 (ASR), and Asp236. Residue Arg212 is part of the active site. Glu241 is an active-site residue. His258 functions as the Proton donor in the catalytic mechanism. Residue Gly261 participates in NAD(+) binding. Residue Tyr262 participates in substrate binding.

It belongs to the D-isomer specific 2-hydroxyacid dehydrogenase family. PdxB subfamily. In terms of assembly, homodimer.

The protein localises to the cytoplasm. The catalysed reaction is 4-phospho-D-erythronate + NAD(+) = (R)-3-hydroxy-2-oxo-4-phosphooxybutanoate + NADH + H(+). It functions in the pathway cofactor biosynthesis; pyridoxine 5'-phosphate biosynthesis; pyridoxine 5'-phosphate from D-erythrose 4-phosphate: step 2/5. Catalyzes the oxidation of erythronate-4-phosphate to 3-hydroxy-2-oxo-4-phosphonooxybutanoate. This chain is Erythronate-4-phosphate dehydrogenase, found in Aeromonas salmonicida (strain A449).